We begin with the raw amino-acid sequence, 273 residues long: Ribosomal RNA small subunit methyltransferase A (273 aa).

The S-adenosyl-L-methionine site is built by N19, L21, G46, E67, D92, and N113.

The protein belongs to the class I-like SAM-binding methyltransferase superfamily. rRNA adenine N(6)-methyltransferase family. RsmA subfamily.

The protein resides in the cytoplasm. It catalyses the reaction adenosine(1518)/adenosine(1519) in 16S rRNA + 4 S-adenosyl-L-methionine = N(6)-dimethyladenosine(1518)/N(6)-dimethyladenosine(1519) in 16S rRNA + 4 S-adenosyl-L-homocysteine + 4 H(+). Functionally, specifically dimethylates two adjacent adenosines (A1518 and A1519) in the loop of a conserved hairpin near the 3'-end of 16S rRNA in the 30S particle. May play a critical role in biogenesis of 30S subunits. The polypeptide is Ribosomal RNA small subunit methyltransferase A (Hahella chejuensis (strain KCTC 2396)).